The chain runs to 137 residues: Universal stress protein HP_0031 (137 aa).

Belongs to the universal stress protein A family.

In Helicobacter pylori (strain ATCC 700392 / 26695) (Campylobacter pylori), this protein is Universal stress protein HP_0031.